Consider the following 69-residue polypeptide: uncharacterized protein (69 aa).

A helical membrane pass occupies residues 32-54 (MLGAIDVAVAVASVPTLFVVTAI).

The protein resides in the membrane. This is an uncharacterized protein from Sinorhizobium fredii (strain NBRC 101917 / NGR234).